The chain runs to 208 residues: Apoptosis inhibitor 193R (208 aa).

A disordered region spans residues 1 to 25 (MDTCGIYNSDNEEFSQENDGENDGG). The span at 10–23 (DNEEFSQENDGEND) shows a compositional bias: acidic residues. The stretch at 37–108 (YDERLNSFQN…QDLKINCLFV (72 aa)) is one BIR repeat. The Zn(2+) site is built by cysteine 74, cysteine 77, histidine 94, and cysteine 105. 3 repeat units span residues 134 to 139 (NQDLDH), 140 to 145 (NQDLDH), and 146 to 151 (NQDLDQ). Residues 134-151 (NQDLDHNQDLDHNQDLDQ) are 3 X 6 AA tandem repeats. An RING-type zinc finger spans residues 163–197 (CKICFTNKITKVLIPCGHSSCYECVFKLQTCPICK).

Belongs to the IIV-6 193R family.

Its function is as follows. Plays a role early in infection by preventing host cell apoptosis. The sequence is that of Apoptosis inhibitor 193R from Invertebrate iridescent virus 6 (IIV-6).